A 389-amino-acid polypeptide reads, in one-letter code: MTSRKPLGRYRRIVIKIGSALLVDRKAGLKKAWLDAMCADISGLKAKGIDVLVVSSGAIALGRSVLDLPSGALKLEESQAAAAVGQIALARAWSESLSRGEIVAGQILLTLGDTEERRRYLNARATINQLLKIGAVPIINENDTVATSEIRYGDNDRLAARVATMTGADLLVLLSDIDGLYTAPPHLDPNATFLETISEITPEIEAMAGGAASELSRGGMRTKIDAGKIATTSGCAMIIASGKTDSPLSAIENGARSSWFAPSGTPVTARKTWIAGQLQPAGGLHVDDGAVTALGAGKSLLPAGVRSISGLFSRGDTVAIIGPAGREIARGLVSYDAEDARRIAGRKSAEIEAILGYPGRAAMVHRDDMVMTAQIGSKSERQKKDAAHA.

K16 lines the ATP pocket. The substrate site is built by S56, D143, and N155. ATP is bound at residue 175–176 (SD). Positions 281 to 358 (AGGLHVDDGA…AEIEAILGYP (78 aa)) constitute a PUA domain.

Belongs to the glutamate 5-kinase family.

Its subcellular location is the cytoplasm. The enzyme catalyses L-glutamate + ATP = L-glutamyl 5-phosphate + ADP. It participates in amino-acid biosynthesis; L-proline biosynthesis; L-glutamate 5-semialdehyde from L-glutamate: step 1/2. Catalyzes the transfer of a phosphate group to glutamate to form L-glutamate 5-phosphate. The sequence is that of Glutamate 5-kinase from Rhizobium leguminosarum bv. trifolii (strain WSM2304).